The following is a 207-amino-acid chain: Dephospho-CoA kinase (207 aa).

One can recognise a DPCK domain in the interval 10 to 207 (ILGLTGGIGS…FYLTLRGGQS (198 aa)). 18–23 (GSGKSA) is a binding site for ATP.

Belongs to the CoaE family.

It localises to the cytoplasm. It catalyses the reaction 3'-dephospho-CoA + ATP = ADP + CoA + H(+). Its pathway is cofactor biosynthesis; coenzyme A biosynthesis; CoA from (R)-pantothenate: step 5/5. Catalyzes the phosphorylation of the 3'-hydroxyl group of dephosphocoenzyme A to form coenzyme A. This is Dephospho-CoA kinase from Pseudomonas savastanoi pv. phaseolicola (strain 1448A / Race 6) (Pseudomonas syringae pv. phaseolicola (strain 1448A / Race 6)).